A 307-amino-acid chain; its full sequence is Methionyl-tRNA formyltransferase (307 aa).

108-111 (SLLP) contacts (6S)-5,6,7,8-tetrahydrofolate.

Belongs to the Fmt family.

The catalysed reaction is L-methionyl-tRNA(fMet) + (6R)-10-formyltetrahydrofolate = N-formyl-L-methionyl-tRNA(fMet) + (6S)-5,6,7,8-tetrahydrofolate + H(+). Attaches a formyl group to the free amino group of methionyl-tRNA(fMet). The formyl group appears to play a dual role in the initiator identity of N-formylmethionyl-tRNA by promoting its recognition by IF2 and preventing the misappropriation of this tRNA by the elongation apparatus. The protein is Methionyl-tRNA formyltransferase of Xanthomonas campestris pv. campestris (strain 8004).